A 349-amino-acid chain; its full sequence is Selenide, water dikinase (349 aa).

Residue U19 is part of the active site. Residue U19 is a non-standard amino acid, selenocysteine. ATP is bound by residues K22 and 50–52; that span reads LGD. D53 lines the Mg(2+) pocket. ATP contacts are provided by residues D69, D92, and 140-142; that span reads GHT. D92 provides a ligand contact to Mg(2+). D246 is a binding site for Mg(2+).

It belongs to the selenophosphate synthase 1 family. Class I subfamily. In terms of assembly, homodimer. Mg(2+) serves as cofactor.

The enzyme catalyses hydrogenselenide + ATP + H2O = selenophosphate + AMP + phosphate + 2 H(+). Synthesizes selenophosphate from selenide and ATP. The protein is Selenide, water dikinase of Methanocaldococcus jannaschii (strain ATCC 43067 / DSM 2661 / JAL-1 / JCM 10045 / NBRC 100440) (Methanococcus jannaschii).